The sequence spans 166 residues: CDP-archaeol synthase (166 aa).

4 consecutive transmembrane segments (helical) span residues 39–59 (IRGFVGGVTAGILIGAVQMYA), 61–81 (ISGLVPWFPPHTLTAVILLAI), 104–124 (EWFLVDQLDFVVGALLLTLLF), and 127–147 (IWMLNTMTIPLLIVILVLTPL).

Belongs to the CDP-archaeol synthase family. It depends on Mg(2+) as a cofactor.

Its subcellular location is the cell membrane. It catalyses the reaction 2,3-bis-O-(geranylgeranyl)-sn-glycerol 1-phosphate + CTP + H(+) = CDP-2,3-bis-O-(geranylgeranyl)-sn-glycerol + diphosphate. Its pathway is membrane lipid metabolism; glycerophospholipid metabolism. Its function is as follows. Catalyzes the formation of CDP-2,3-bis-(O-geranylgeranyl)-sn-glycerol (CDP-archaeol) from 2,3-bis-(O-geranylgeranyl)-sn-glycerol 1-phosphate (DGGGP) and CTP. This reaction is the third ether-bond-formation step in the biosynthesis of archaeal membrane lipids. The protein is CDP-archaeol synthase of Methanospirillum hungatei JF-1 (strain ATCC 27890 / DSM 864 / NBRC 100397 / JF-1).